A 214-amino-acid chain; its full sequence is N-(5'-phosphoribosyl)anthranilate isomerase (214 aa).

This sequence belongs to the TrpF family.

It carries out the reaction N-(5-phospho-beta-D-ribosyl)anthranilate = 1-(2-carboxyphenylamino)-1-deoxy-D-ribulose 5-phosphate. Its pathway is amino-acid biosynthesis; L-tryptophan biosynthesis; L-tryptophan from chorismate: step 3/5. This Rhodospirillum centenum (strain ATCC 51521 / SW) protein is N-(5'-phosphoribosyl)anthranilate isomerase.